Reading from the N-terminus, the 103-residue chain is Cell division protein FtsB (103 aa).

Topologically, residues 1–3 (MGK) are cytoplasmic. The helical transmembrane segment at 4–21 (LTLLLLAILVWLQYSLWF) threads the bilayer. Topologically, residues 22 to 103 (GKNGIHDYTR…RAQSAGQNNR (82 aa)) are periplasmic. Positions 28-71 (DYTRVNDDVAALQATNAKLKARNDQLFAEIDDLNGGQEALEERA) form a coiled coil.

Belongs to the FtsB family. Part of a complex composed of FtsB, FtsL and FtsQ.

The protein localises to the cell inner membrane. Functionally, essential cell division protein. May link together the upstream cell division proteins, which are predominantly cytoplasmic, with the downstream cell division proteins, which are predominantly periplasmic. The chain is Cell division protein FtsB from Shigella flexneri serotype 5b (strain 8401).